The sequence spans 110 residues: Multidrug transporter PA4990 (110 aa).

Transmembrane regions (helical) follow at residues 7-27, 31-51, 58-78, and 85-105; these read LAIA…VAGF, LPLL…VLVM, VVYA…AMFV, and PAAL…QLFS.

The protein belongs to the drug/metabolite transporter (DMT) superfamily. Small multidrug resistance (SMR) (TC 2.A.7.1) family.

The protein localises to the cell membrane. Functionally, confers resistance to ethidium bromide, acriflavine and methyl viologen. The sequence is that of Multidrug transporter PA4990 from Pseudomonas aeruginosa (strain ATCC 15692 / DSM 22644 / CIP 104116 / JCM 14847 / LMG 12228 / 1C / PRS 101 / PAO1).